A 366-amino-acid chain; its full sequence is Chorismate synthase (366 aa).

2 residues coordinate NADP(+): arginine 48 and arginine 54. FMN-binding positions include 125 to 127 (RSS), 238 to 239 (NA), glycine 278, 293 to 297 (KPTSS), and arginine 319.

Belongs to the chorismate synthase family. In terms of assembly, homotetramer. FMNH2 serves as cofactor.

The enzyme catalyses 5-O-(1-carboxyvinyl)-3-phosphoshikimate = chorismate + phosphate. It participates in metabolic intermediate biosynthesis; chorismate biosynthesis; chorismate from D-erythrose 4-phosphate and phosphoenolpyruvate: step 7/7. Its function is as follows. Catalyzes the anti-1,4-elimination of the C-3 phosphate and the C-6 proR hydrogen from 5-enolpyruvylshikimate-3-phosphate (EPSP) to yield chorismate, which is the branch point compound that serves as the starting substrate for the three terminal pathways of aromatic amino acid biosynthesis. This reaction introduces a second double bond into the aromatic ring system. In Thiobacillus denitrificans (strain ATCC 25259 / T1), this protein is Chorismate synthase.